A 142-amino-acid polypeptide reads, in one-letter code: Large ribosomal subunit protein uL11 (142 aa).

This sequence belongs to the universal ribosomal protein uL11 family. Part of the ribosomal stalk of the 50S ribosomal subunit. Interacts with L10 and the large rRNA to form the base of the stalk. L10 forms an elongated spine to which L12 dimers bind in a sequential fashion forming a multimeric L10(L12)X complex. Post-translationally, one or more lysine residues are methylated.

Forms part of the ribosomal stalk which helps the ribosome interact with GTP-bound translation factors. In Tolumonas auensis (strain DSM 9187 / NBRC 110442 / TA 4), this protein is Large ribosomal subunit protein uL11.